The sequence spans 365 residues: NADH-quinone oxidoreductase subunit D (365 aa).

It belongs to the complex I 49 kDa subunit family. As to quaternary structure, NDH-1 is composed of 14 different subunits. Subunits NuoB, C, D, E, F, and G constitute the peripheral sector of the complex.

Its subcellular location is the cell membrane. The catalysed reaction is a quinone + NADH + 5 H(+)(in) = a quinol + NAD(+) + 4 H(+)(out). Functionally, NDH-1 shuttles electrons from NADH, via FMN and iron-sulfur (Fe-S) centers, to quinones in the respiratory chain. The immediate electron acceptor for the enzyme in this species is believed to be a menaquinone. Couples the redox reaction to proton translocation (for every two electrons transferred, four hydrogen ions are translocated across the cytoplasmic membrane), and thus conserves the redox energy in a proton gradient. The chain is NADH-quinone oxidoreductase subunit D from Carboxydothermus hydrogenoformans (strain ATCC BAA-161 / DSM 6008 / Z-2901).